The sequence spans 453 residues: Phosphoglucosamine mutase (453 aa).

Ser-100 acts as the Phosphoserine intermediate in catalysis. The Mg(2+) site is built by Ser-100, Asp-239, Asp-241, and Asp-243. Ser-100 carries the phosphoserine modification.

This sequence belongs to the phosphohexose mutase family. The cofactor is Mg(2+). Post-translationally, activated by phosphorylation.

It carries out the reaction alpha-D-glucosamine 1-phosphate = D-glucosamine 6-phosphate. Functionally, catalyzes the conversion of glucosamine-6-phosphate to glucosamine-1-phosphate. This chain is Phosphoglucosamine mutase, found in Buchnera aphidicola subsp. Baizongia pistaciae (strain Bp).